The sequence spans 144 residues: Interferon-induced transmembrane protein 2 (144 aa).

At methionine 1 the chain carries N-acetylmethionine. Residues 1 to 56 lie on the Cytoplasmic side of the membrane; it reads MSHNSQAFLSTNAGLPPSYETIKEEYGVTELGEPSNSAVVRTTVINMPREVSVPDH. Tyrosine 19 bears the Phosphotyrosine mark. Positions 57–77 form an intramembrane region, helical; the sequence is VVWSLFNTLFFNACCLGFVAY. Residues cysteine 70, cysteine 71, and cysteine 104 are each lipidated (S-palmitoyl cysteine). At 78–110 the chain is on the cytoplasmic side; it reads AYSVKSRDRKMVGDVVGAQAYASTAKCLNISSL. Residues 111 to 131 form a helical membrane-spanning segment; that stretch reads IFSILMVIICIIIFSTTSVVV. The Extracellular portion of the chain corresponds to 132 to 144; that stretch reads FQSFAQRTPHSGF.

The protein belongs to the CD225/Dispanin family. Interacts with CD81. Post-translationally, palmitoylation on membrane-proximal cysteines controls clustering in membrane compartments and antiviral activity. Phosphorylation at Tyr-19 is required for endosomal and lysosomal location. Predominantly expressed in nascent primordial germ cells, as well as in gonadal germ cells.

It is found in the cell membrane. Its subcellular location is the lysosome membrane. The protein localises to the late endosome membrane. IFN-induced antiviral protein which inhibits the entry of viruses to the host cell cytoplasm, permitting endocytosis, but preventing subsequent viral fusion and release of viral contents into the cytosol. Active against multiple viruses, including influenza A virus, SARS coronavirus (SARS-CoV), Marburg virus (MARV) and Ebola virus (EBOV), Dengue virus (DNV) and West Nile virus (WNV). Can inhibit: influenza virus hemagglutinin protein-mediated viral entry, MARV and EBOV GP1,2-mediated viral entry and SARS-CoV S protein-mediated viral entry. Induces cell cycle arrest and mediates apoptosis by caspase activation and in p53-independent manner. This Mus musculus (Mouse) protein is Interferon-induced transmembrane protein 2 (Ifitm2).